The following is a 744-amino-acid chain: Tripartite motif-containing protein 2 (744 aa).

Ser10 is subject to Phosphoserine. The segment at 23 to 64 (CSICLERYKNPKVLPCLHTFCERCLQNYIPAHSLTLSCPVCR) adopts an RING-type zinc-finger fold. Residues 113 to 154 (GKPLSCPNHDGNVMEFYCQSCETAMCRECTEGEHAEHPTVPL) form a B box-type zinc finger. Zn(2+)-binding residues include Cys118, His121, Cys141, and His146. A Filamin repeat occupies 320 to 421 (TTNAVASETV…IRGSPFKLKV (102 aa)). Position 371 is a phosphothreonine (Thr371). 3 positions are modified to phosphoserine: Ser375, Ser424, and Ser428. The segment at 432 to 462 (EGVKRRVKSPGSGHVKQKAVKRPASMYSTGK) is disordered. 6 NHL repeats span residues 473-516 (IFRV…FSND), 520-563 (KSRF…FSSD), 564-605 (GKFK…FQPN), 609-652 (VTRF…FNQE), 656-699 (MLKF…FDGS), and 700-743 (GSFL…YRYL).

It belongs to the TRIM/RBCC family. Forms homooligomers. Interacts with TRIM3; this interaction reduces TRIM2 activity. Interacts with myosin V; myosin V may not be a substrate for ubiquitination. Interacts with NEFL. Interacts with phosphorylated BCL2L11. Interacts with SIRPA. RING-type zinc finger-dependent and UBE2D1-dependent autoubiquitination.

It is found in the cytoplasm. The catalysed reaction is S-ubiquitinyl-[E2 ubiquitin-conjugating enzyme]-L-cysteine + [acceptor protein]-L-lysine = [E2 ubiquitin-conjugating enzyme]-L-cysteine + N(6)-ubiquitinyl-[acceptor protein]-L-lysine.. It participates in protein modification; protein ubiquitination. In terms of biological role, UBE2D1-dependent E3 ubiquitin-protein ligase that mediates the ubiquitination of NEFL and of phosphorylated BCL2L11. Plays a neuroprotective function. May play a role in neuronal rapid ischemic tolerance. Plays a role in antiviral immunity and limits New World arenavirus infection independently of its ubiquitin ligase activity. This is Tripartite motif-containing protein 2 (TRIM2) from Homo sapiens (Human).